Here is a 579-residue protein sequence, read N- to C-terminus: MFS-type transporter sphD (579 aa).

Residues S17 to R62 are disordered. The segment covering P51 to R62 has biased composition (basic and acidic residues). 8 helical membrane passes run A73–I93, F110–I130, P138–Q158, V168–M188, L200–A220, W227–L247, W267–A287, and G294–F314. Residue N335 is glycosylated (N-linked (GlcNAc...) asparagine). 6 helical membrane passes run L338–I358, A367–L391, Y398–F419, L429–M449, G460–I480, and F541–F561.

The protein belongs to the major facilitator superfamily.

It is found in the membrane. Its function is as follows. MFS-type transporter; part of the gene cluster that mediates the biosynthesis of sphingofungins, bioactive molecules acting as sphingolipid inhibitors via inhibiting serine palmitoyl transferase (SPT). In Aspergillus fumigatus (strain CBS 144.89 / FGSC A1163 / CEA10) (Neosartorya fumigata), this protein is MFS-type transporter sphD.